The sequence spans 341 residues: HTH-type transcriptional repressor PurR (341 aa).

The HTH lacI-type domain occupies 2–56; sequence ATIKDVAKRANVSTTTVSHVINKTRFVAEETRNAVWAAIKELHYSPSAVARSLKV. The segment at residues 4-23 is a DNA-binding region (H-T-H motif); the sequence is IKDVAKRANVSTTTVSHVIN. A DNA-binding region spans residues 48–56; that stretch reads SAVARSLKV. Positions 73, 190, 192, 221, and 275 each coordinate hypoxanthine.

Homodimer.

The protein operates within purine metabolism; purine nucleotide biosynthesis [regulation]. In terms of biological role, is the main repressor of the genes involved in the de novo synthesis of purine nucleotides, regulating purB, purC, purEK, purF, purHD, purL, purMN and guaBA expression. PurR is allosterically activated to bind its cognate DNA by binding the purine corepressors, hypoxanthine or guanine, thereby effecting transcription repression. The sequence is that of HTH-type transcriptional repressor PurR from Salmonella typhi.